Reading from the N-terminus, the 238-residue chain is Purine nucleoside phosphorylase DeoD-type (238 aa).

Histidine 4 is an a purine D-ribonucleoside binding site. Residues glycine 20, arginine 24, arginine 43, and 87 to 90 (RIGS) contribute to the phosphate site. Residues 181–183 (EME) and 205–206 (SD) contribute to the a purine D-ribonucleoside site. Aspartate 206 serves as the catalytic Proton donor.

This sequence belongs to the PNP/UDP phosphorylase family. In terms of assembly, homohexamer; trimer of homodimers.

The enzyme catalyses a purine D-ribonucleoside + phosphate = a purine nucleobase + alpha-D-ribose 1-phosphate. The catalysed reaction is a purine 2'-deoxy-D-ribonucleoside + phosphate = a purine nucleobase + 2-deoxy-alpha-D-ribose 1-phosphate. Catalyzes the reversible phosphorolytic breakdown of the N-glycosidic bond in the beta-(deoxy)ribonucleoside molecules, with the formation of the corresponding free purine bases and pentose-1-phosphate. The protein is Purine nucleoside phosphorylase DeoD-type of Mycoplasma genitalium (strain ATCC 33530 / DSM 19775 / NCTC 10195 / G37) (Mycoplasmoides genitalium).